We begin with the raw amino-acid sequence, 260 residues long: Aspartate/glutamate leucyltransferase (260 aa).

It belongs to the R-transferase family. Bpt subfamily.

The protein localises to the cytoplasm. It carries out the reaction N-terminal L-glutamyl-[protein] + L-leucyl-tRNA(Leu) = N-terminal L-leucyl-L-glutamyl-[protein] + tRNA(Leu) + H(+). The catalysed reaction is N-terminal L-aspartyl-[protein] + L-leucyl-tRNA(Leu) = N-terminal L-leucyl-L-aspartyl-[protein] + tRNA(Leu) + H(+). Its function is as follows. Functions in the N-end rule pathway of protein degradation where it conjugates Leu from its aminoacyl-tRNA to the N-termini of proteins containing an N-terminal aspartate or glutamate. This is Aspartate/glutamate leucyltransferase from Sphingomonas elodea.